Reading from the N-terminus, the 64-residue chain is Large ribosomal subunit protein bL35 (64 aa).

Over residues Met-1–His-26 the composition is skewed to basic residues. Positions Met-1–Arg-42 are disordered.

The protein belongs to the bacterial ribosomal protein bL35 family.

In Exiguobacterium sp. (strain ATCC BAA-1283 / AT1b), this protein is Large ribosomal subunit protein bL35.